The primary structure comprises 288 residues: Anthranilate synthase beta subunit 1, chloroplastic (288 aa).

The transit peptide at 1–58 directs the protein to the chloroplast; sequence MACSHLAAAAAAASPAAARSPAASSAATASAFARLSATPRVASGGLAVRGQRGVAAVV. The region spanning 83–282 is the Glutamine amidotransferase type-1 domain; that stretch reads PIIVIDNYDS…VRFIEELEKQ (200 aa). 134-136 is a binding site for L-glutamine; it reads GPG. The active-site Nucleophile is Cys161. Residues Gln165 and 215-216 contribute to the L-glutamine site; that span reads SL. Residues His256 and Glu258 contribute to the active site.

As to quaternary structure, heterotetramer consisting of two non-identical subunits: a beta subunit and a large alpha subunit. In terms of tissue distribution, expressed in roots and leaves.

Its subcellular location is the plastid. The protein resides in the chloroplast. The enzyme catalyses chorismate + L-glutamine = anthranilate + pyruvate + L-glutamate + H(+). Its pathway is amino-acid biosynthesis; L-tryptophan biosynthesis; L-tryptophan from chorismate: step 1/5. Functionally, part of a heterotetrameric complex that catalyzes the two-step biosynthesis of anthranilate, an intermediate in the biosynthesis of L-tryptophan. In the first step, the glutamine-binding beta subunit of anthranilate synthase (AS) provides the glutamine amidotransferase activity which generates ammonia as a substrate that, along with chorismate, is used in the second step, catalyzed by the large alpha subunit of AS to produce anthranilate. The sequence is that of Anthranilate synthase beta subunit 1, chloroplastic from Oryza sativa subsp. japonica (Rice).